The chain runs to 162 residues: NADH-quinone oxidoreductase subunit I (162 aa).

4Fe-4S ferredoxin-type domains lie at 53–83 (LRRYANGEERCIACKLCEAVCPALAITIEAE) and 93–122 (TRYDIDMTKCIYCGLCEEACPVDAIVEGPN). [4Fe-4S] cluster-binding residues include Cys-63, Cys-66, Cys-69, Cys-73, Cys-102, Cys-105, Cys-108, and Cys-112.

Belongs to the complex I 23 kDa subunit family. As to quaternary structure, NDH-1 is composed of 14 different subunits. Subunits NuoA, H, J, K, L, M, N constitute the membrane sector of the complex. [4Fe-4S] cluster serves as cofactor.

Its subcellular location is the cell inner membrane. The catalysed reaction is a quinone + NADH + 5 H(+)(in) = a quinol + NAD(+) + 4 H(+)(out). Its function is as follows. NDH-1 shuttles electrons from NADH, via FMN and iron-sulfur (Fe-S) centers, to quinones in the respiratory chain. The immediate electron acceptor for the enzyme in this species is believed to be ubiquinone. Couples the redox reaction to proton translocation (for every two electrons transferred, four hydrogen ions are translocated across the cytoplasmic membrane), and thus conserves the redox energy in a proton gradient. The chain is NADH-quinone oxidoreductase subunit I from Granulibacter bethesdensis (strain ATCC BAA-1260 / CGDNIH1).